The sequence spans 141 residues: Hemoglobin subunit alpha-D (141 aa).

Residues 1-141 (MLTAEDKKLI…VAAVLAEKYR (141 aa)) enclose the Globin domain. Residues histidine 58 and histidine 87 each coordinate heme b.

It belongs to the globin family. Heterotetramer of two alpha-D chains and two beta chains. As to expression, red blood cells.

Functionally, involved in oxygen transport from the lung to the various peripheral tissues. In Anas platyrhynchos (Mallard), this protein is Hemoglobin subunit alpha-D (HBAD).